The chain runs to 209 residues: Pyridoxine/pyridoxamine 5'-phosphate oxidase (209 aa).

Residues 57–62, 72–73, K79, and Q101 contribute to the FMN site; these read RMVLLK and YT. A substrate-binding site is contributed by K62. Residues Y119, R123, and S127 each coordinate substrate. FMN-binding positions include 136-137 and W181; that span reads QS. 187–189 provides a ligand contact to substrate; it reads RLH. R191 lines the FMN pocket.

This sequence belongs to the pyridoxamine 5'-phosphate oxidase family. In terms of assembly, homodimer. The cofactor is FMN.

It catalyses the reaction pyridoxamine 5'-phosphate + O2 + H2O = pyridoxal 5'-phosphate + H2O2 + NH4(+). The enzyme catalyses pyridoxine 5'-phosphate + O2 = pyridoxal 5'-phosphate + H2O2. It functions in the pathway cofactor metabolism; pyridoxal 5'-phosphate salvage; pyridoxal 5'-phosphate from pyridoxamine 5'-phosphate: step 1/1. It participates in cofactor metabolism; pyridoxal 5'-phosphate salvage; pyridoxal 5'-phosphate from pyridoxine 5'-phosphate: step 1/1. In terms of biological role, catalyzes the oxidation of either pyridoxine 5'-phosphate (PNP) or pyridoxamine 5'-phosphate (PMP) into pyridoxal 5'-phosphate (PLP). The polypeptide is Pyridoxine/pyridoxamine 5'-phosphate oxidase (Chelativorans sp. (strain BNC1)).